Here is a 58-residue protein sequence, read N- to C-terminus: Small ribosomal subunit protein bS21 (58 aa).

Residues 34–58 (KREHYESPSVRRKKKSEAARRRKRR) are disordered. Positions 43 to 58 (VRRKKKSEAARRRKRR) are enriched in basic residues.

It belongs to the bacterial ribosomal protein bS21 family.

This is Small ribosomal subunit protein bS21 from Caldicellulosiruptor bescii (strain ATCC BAA-1888 / DSM 6725 / KCTC 15123 / Z-1320) (Anaerocellum thermophilum).